The following is a 259-amino-acid chain: Snake venom serine protease homolog rhinocerase 3 (259 aa).

An N-terminal signal peptide occupies residues 1–17 (VLIRVLANLLLLQLSYA). The propeptide occupies 18–23 (QESSEL). One can recognise a Peptidase S1 domain in the interval 24 to 250 (VIGGDECDIN…YTDWIEGIIA (227 aa)). Cystine bridges form between Cys-30–Cys-164, Cys-51–Cys-67, Cys-99–Cys-257, Cys-143–Cys-211, Cys-175–Cys-190, and Cys-201–Cys-226. Asn-80 carries an N-linked (GlcNAc...) asparagine glycan. Residue Asn-252 is glycosylated (N-linked (GlcNAc...) asparagine).

The protein belongs to the peptidase S1 family. Snake venom subfamily. As to expression, expressed by the venom gland.

It is found in the secreted. Functionally, snake venom serine protease homolog that may act in the hemostasis system of the prey. The chain is Snake venom serine protease homolog rhinocerase 3 from Bitis rhinoceros (West African gaboon viper).